Here is an 85-residue protein sequence, read N- to C-terminus: UPF0335 protein BQ12070 (85 aa).

Belongs to the UPF0335 family.

This chain is UPF0335 protein BQ12070, found in Bartonella quintana (strain Toulouse) (Rochalimaea quintana).